The chain runs to 297 residues: MGKRIFLFLLSNILVITTIGIVLSIIGSLTGVGTYFTANGGIDIVALLVFSAVVGFVGSFMSLLMSRWMAKMAMGVQVLNPDKQTLSYEEQQLVDRVYKLSRAAGLTKMPEVGIYNSREVNAFATGPSKNRSLVAVSTGLLQEMDDDAVEGVLAHEVAHIANGDMVTMTLLQGIVNTFVVFFARIAAWAVSRVVREELAPIVHFIAVIVFQIVFSILGSLVVFAYSRHREYHADRGGADLAGKDKMIHALRSLEQYTSRVKEEQASVATLKINGKKHTSLFSTHPDLSDRIRRLEAK.

2 helical membrane-spanning segments follow: residues 5-25 and 44-64; these read IFLF…VLSI and IVAL…MSLL. A Zn(2+)-binding site is contributed by His155. Residue Glu156 is part of the active site. His159 serves as a coordination point for Zn(2+). 2 helical membrane passes run 170–190 and 204–224; these read LLQG…AWAV and FIAV…VVFA. Zn(2+) is bound at residue Glu230.

The protein belongs to the peptidase M48B family. Zn(2+) is required as a cofactor.

The protein localises to the cell membrane. This Bacillus licheniformis (strain ATCC 14580 / DSM 13 / JCM 2505 / CCUG 7422 / NBRC 12200 / NCIMB 9375 / NCTC 10341 / NRRL NRS-1264 / Gibson 46) protein is Protease HtpX homolog.